Here is a 401-residue protein sequence, read N- to C-terminus: Subtilisin-like protease 7 (401 aa).

Positions 1 to 20 (MGFITKAIPLALAAASVING) are cleaved as a signal peptide. The propeptide occupies 21 to 119 (AEILETRAGV…IERDARVQIN (99 aa)). In terms of domain architecture, Inhibitor I9 spans 36 to 118 (KYIVVMNDGM…YIERDARVQI (83 aa)). Asparagine 58 carries an N-linked (GlcNAc...) asparagine glycan. A Peptidase S8 domain is found at 129-401 (SWGLARVGSR…SKLINNGSGM (273 aa)). Residues aspartate 161 and histidine 193 each act as charge relay system in the active site. N-linked (GlcNAc...) asparagine glycosylation is found at asparagine 223 and asparagine 253. Serine 347 serves as the catalytic Charge relay system. A glycan (N-linked (GlcNAc...) asparagine) is linked at asparagine 397.

It belongs to the peptidase S8 family.

The protein localises to the secreted. Its function is as follows. Secreted subtilisin-like serine protease with keratinolytic activity that contributes to pathogenicity. This is Subtilisin-like protease 7 (SUB7) from Trichophyton tonsurans (Scalp ringworm fungus).